The chain runs to 240 residues: Glutamine transport ATP-binding protein GlnQ (240 aa).

The region spanning 2–236 is the ABC transporter domain; that stretch reads IEFKNVSKHF…PPSQRLQEFL (235 aa). 34 to 41 contacts ATP; the sequence is GPSGSGKS.

It belongs to the ABC transporter superfamily. Heterotetramer with 2 subunits of GlnQ and 2 subunits of GlnP.

The protein localises to the cell inner membrane. Part of the binding-protein-dependent transport system for glutamine. Probably responsible for energy coupling to the transport system. The chain is Glutamine transport ATP-binding protein GlnQ (glnQ) from Escherichia coli (strain K12).